The sequence spans 477 residues: Endogenous retrovirus group V member 1 Env polyprotein (477 aa).

Residues M1–A21 form the signal peptide. Topologically, residues Q22–A321 are extracellular. N68 carries an N-linked (GlcNAc...) asparagine glycan. A helical membrane pass occupies residues L322 to F342. Topologically, residues T343 to L477 are cytoplasmic.

This sequence belongs to the gamma type-C retroviral envelope protein family. As to expression, expressed in placenta.

The protein localises to the membrane. In Homo sapiens (Human), this protein is Endogenous retrovirus group V member 1 Env polyprotein (ERVV-1).